Consider the following 88-residue polypeptide: Mitochondrial import inner membrane translocase subunit TIM9 (88 aa).

The short motif at 35-59 (CFDDCVNDFTSNNLTTKETGCITKC) is the Twin CX3C motif element. Cystine bridges form between cysteine 35/cysteine 59 and cysteine 39/cysteine 55.

Belongs to the small Tim family. Heterohexamer; composed of 3 copies of TIM9 and 3 copies of TIM10, named soluble 70 kDa complex. Associates with the TIM22 complex, whose core is composed of TIM22 and TIM54. Interacts with the transmembrane regions of multi-pass transmembrane proteins in transit.

It is found in the mitochondrion inner membrane. In terms of biological role, mitochondrial intermembrane chaperone that participates in the import and insertion of multi-pass transmembrane proteins into the mitochondrial inner membrane. Also required for the transfer of beta-barrel precursors from the TOM complex to the sorting and assembly machinery (SAM complex) of the outer membrane. Acts as a chaperone-like protein that protects the hydrophobic precursors from aggregation and guide them through the mitochondrial intermembrane space. This chain is Mitochondrial import inner membrane translocase subunit TIM9 (TIM9), found in Debaryomyces hansenii (strain ATCC 36239 / CBS 767 / BCRC 21394 / JCM 1990 / NBRC 0083 / IGC 2968) (Yeast).